The sequence spans 198 residues: MNDYIKSHIQSSINVKEAILADEELLRLIEQVATKAIEVYQNGNKILLAGNGGSAADAQHIAGEFVSRFYFDRPGLPSLALTTDTSILTAIGNDYGYEHLFSRQLQANGMEGDMFIGISTSGNSSNIIKALEMCKEKGIIAVGLTGATGGKMARLCDYCIKVPSKETPRIQESHIVIGHIICALVEEAIFRNKFVSVK.

The SIS domain maps to 36–195 (AIEVYQNGNK…EEAIFRNKFV (160 aa)). 51–53 (NGG) serves as a coordination point for substrate. The Zn(2+) site is built by histidine 60 and glutamate 64. Substrate is bound by residues glutamate 64, 93-94 (ND), 119-121 (STS), serine 124, and glutamine 171. Zn(2+) is bound by residues glutamine 171 and histidine 179.

The protein belongs to the SIS family. GmhA subfamily. Zn(2+) serves as cofactor.

The protein localises to the cytoplasm. The enzyme catalyses 2 D-sedoheptulose 7-phosphate = D-glycero-alpha-D-manno-heptose 7-phosphate + D-glycero-beta-D-manno-heptose 7-phosphate. The protein operates within carbohydrate biosynthesis; D-glycero-D-manno-heptose 7-phosphate biosynthesis; D-glycero-alpha-D-manno-heptose 7-phosphate and D-glycero-beta-D-manno-heptose 7-phosphate from sedoheptulose 7-phosphate: step 1/1. Its pathway is cell surface structure biogenesis; S-layer biogenesis. In terms of biological role, catalyzes the isomerization of sedoheptulose 7-phosphate in D-glycero-D-manno-heptose 7-phosphate. The sequence is that of Phosphoheptose isomerase from Aneurinibacillus thermoaerophilus.